The chain runs to 856 residues: Structure-specific endonuclease subunit SLX4 (856 aa).

Positions methionine 1 to serine 19 are enriched in polar residues. Disordered stretches follow at residues methionine 1 to valine 24, valine 38 to isoleucine 65, valine 88 to alanine 121, lysine 139 to leucine 202, glycine 296 to glutamine 326, lysine 362 to proline 392, serine 621 to aspartate 640, arginine 668 to proline 689, and aspartate 715 to aspartate 742. The span at serine 51–serine 60 shows a compositional bias: low complexity. Positions lysine 139–arginine 152 are enriched in basic residues. Over residues glycine 296–aspartate 309 the composition is skewed to polar residues. Over residues serine 673–asparagine 686 the composition is skewed to polar residues.

Belongs to the SLX4 family. Forms a heterodimer with SLX1. Post-translationally, phosphorylated in response to DNA damage.

The protein resides in the nucleus. Its function is as follows. Regulatory subunit of the SLX1-SLX4 structure-specific endonuclease that resolves DNA secondary structures generated during DNA repair and recombination. Has endonuclease activity towards branched DNA substrates, introducing single-strand cuts in duplex DNA close to junctions with ss-DNA. This is Structure-specific endonuclease subunit SLX4 from Blastomyces gilchristii (strain SLH14081) (Blastomyces dermatitidis).